The sequence spans 619 residues: MGDEDGGRRGGITRDLQKLKQQAMAYYQENDVPRKLEDLLNSTFYLQPADVYGHLKANYFSKLAKPPSICKIVGKTILDGLGLPTLQVEISCTIQNFPKYICAVAIPTHFEVVENALPEALDAEDSERAQAVNTAVQWINQSITEELWGLVPSNQAEVDHRLRTFFEHKVQEDKERKELEKSQEELVPAPPPVTLPPPPPPPPPPPSKKKGQKAGRRDTLLEKPVSPPEPPEPVLHGSMAIGAVSLAVAKASATLASDPLYLTLASLKHDQEQPSTFSMPLLMGSVLSCGKSSPGKLHLMKEVICIPSPGLTAKQSVELLLEIQKQVNRAMETLPPPKQETKKGHNGSKRAQPPITGKVSHLGCLTINYDAIEQPLLLLQGICSNLGLELGVNFHLAINCAGHELMDYSKGKYEVMVGTHKSAAEMVELYVDLINKYPSIIALIDPFRKEDAEQWDSLYAALASRCYLIAGAASGSVSKLLECRNISTLKSHGLIIKHTNQTTMSDLVEITHLINGKKLLAVFGSTDSESSDDSLVDLAVGFGARFIKLGGLSRGERMTKYNRLLAIEEELIQRGVWGFSEEHNFSFFQEDATATMAEETLGLLDSIFPTEVIEESAKT.

The span at 173–184 (DKERKELEKSQE) shows a compositional bias: basic and acidic residues. Residues 173 to 236 (DKERKELEKS…PPEPPEPVLH (64 aa)) form a disordered region. The span at 188–206 (PAPPPVTLPPPPPPPPPPP) shows a compositional bias: pro residues. Glutamate 302 contributes to the substrate binding site. Residues 333-354 (TLPPPKQETKKGHNGSKRAQPP) form a disordered region. The active-site Proton acceptor is the lysine 497. Lysine 548 is a binding site for substrate.

This sequence belongs to the enolase family. As to quaternary structure, interacts with ENO1. Isoform 1 and isoform 4 interact with AKAP4. In terms of processing, synthesized as an approximately 70-kDa precursor, which then undergoes proteolytic cleavage to an approximately 60-kDa enzyme; HOATZ associates directly or indirectly with ENO4 to mediate this process before its transport to mature flagella. As to expression, testis-specific. Expressed in spermatids and ependyma (at protein level). Expressed at higher levels in late spermatids than in pachytene spermatocytes. In terms of tissue distribution, expressed at higher levels in pachytene spermatocytes than in late spermatids.

It catalyses the reaction (2R)-2-phosphoglycerate = phosphoenolpyruvate + H2O. Its pathway is carbohydrate degradation; glycolysis; pyruvate from D-glyceraldehyde 3-phosphate: step 4/5. In terms of biological role, required for sperm motility, function and male fertility. May be involved in the normal assembly of the sperm fibrous sheath and provides most of the enolase activity in sperm. In Mus musculus (Mouse), this protein is Enolase 4 (Eno4).